The sequence spans 853 residues: Envelope glycoprotein gp160 (853 aa).

Positions 1–31 (MRVRGIERNCQNLWKWGIMLLGILMTCSNAD) are cleaved as a signal peptide. The Extracellular portion of the chain corresponds to 32–681 (NLWVTVYYGV…ITQWLWYIKI (650 aa)). Residues Cys-53 and Cys-73 are joined by a disulfide bond. N-linked (GlcNAc...) asparagine; by host glycosylation is found at Asn-87, Asn-137, Asn-144, Asn-153, Asn-157, Asn-185, Asn-188, Asn-198, Asn-235, Asn-242, Asn-263, Asn-277, Asn-290, and Asn-296. 5 cysteine pairs are disulfide-bonded: Cys-118–Cys-206, Cys-125–Cys-197, Cys-130–Cys-154, Cys-219–Cys-248, and Cys-229–Cys-240. Positions 130–153 (CIDEVMENVTMKNNNVTEEIRMKN) are V1. The interval 154–197 (CSFNITTVVRDKTKQVHALFYRLDIVPIDNDNSTNSTNYRLINC) is V2. The tract at residues 297-329 (CTRPYRNIRQRTSIGLGQALYTTKTRSIIGQAY) is V3. Cys-297 and Cys-330 are oxidised to a cystine. N-linked (GlcNAc...) asparagine; by host glycans are attached at residues Asn-331, Asn-338, and Asn-353. Residues 362–372 (SSGGDPEITTH) are CD4-binding loop. Disulfide bonds link Cys-376–Cys-442 and Cys-383–Cys-415. A V4 region spans residues 383 to 415 (CNTSGLFNSTWDISKSEWANSTESDDKPITLQC). 8 N-linked (GlcNAc...) asparagine; by host glycosylation sites follow: Asn-384, Asn-390, Asn-402, Asn-441, Asn-445, Asn-458, Asn-459, and Asn-462. V5 regions lie at residues 457–468 (TNNSSNETFRPG) and 460–468 (SSNETFRPG). Positions 509–529 (AIGLGAMFLGFLGAAGSTMGA) are fusion peptide. The interval 571 to 589 (KQLQARILAVERYLKDQQL) is immunosuppression. The cysteines at positions 595 and 601 are disulfide-linked. N-linked (GlcNAc...) asparagine; by host glycans are attached at residues Asn-608, Asn-613, Asn-622, Asn-634, and Asn-671. Residues 630–664 (REIDNYTGLIYRLIEESQTQQEKNEQELLELDKWA) are a coiled coil. Positions 659–680 (ELDKWASLWNWFNITQWLWYIK) are MPER; binding to GalCer. A helical transmembrane segment spans residues 682-702 (FIMIVGGLIGLRIVFAVLSLV). The Cytoplasmic segment spans residues 703-853 (NRVRQGYSPL…IRQGLERLLL (151 aa)). The YXXL motif; contains endocytosis signal signature appears at 709-712 (YSPL). Residues Cys-761 and Cys-834 are each lipidated (S-palmitoyl cysteine; by host). The Di-leucine internalization motif signature appears at 852-853 (LL).

It belongs to the HIV-1 env protein family. As to quaternary structure, the mature envelope protein (Env) consists of a homotrimer of non-covalently associated gp120-gp41 heterodimers. The resulting complex protrudes from the virus surface as a spike. There seems to be as few as 10 spikes on the average virion. Interacts with host CD4, CCR5 and CXCR4. Gp120 also interacts with the C-type lectins CD209/DC-SIGN and CLEC4M/DC-SIGNR (collectively referred to as DC-SIGN(R)). Gp120 and gp41 interact with GalCer. Gp120 interacts with host ITGA4/ITGB7 complex; on CD4+ T-cells, this interaction results in rapid activation of integrin ITGAL/LFA-1, which facilitates efficient cell-to-cell spreading of HIV-1. Gp120 interacts with cell-associated heparan sulfate; this interaction increases virus infectivity on permissive cells and may be involved in infection of CD4- cells. The mature envelope protein (Env) consists of a homotrimer of non-covalently associated gp120-gp41 heterodimers. The resulting complex protrudes from the virus surface as a spike. There seems to be as few as 10 spikes on the average virion. Highly glycosylated by host. The high number of glycan on the protein is reffered to as 'glycan shield' because it contributes to hide protein sequence from adaptive immune system. Post-translationally, palmitoylation of the transmembrane protein and of Env polyprotein (prior to its proteolytic cleavage) is essential for their association with host cell membrane lipid rafts. Palmitoylation is therefore required for envelope trafficking to classical lipid rafts, but not for viral replication. In terms of processing, specific enzymatic cleavages in vivo yield mature proteins. Envelope glycoproteins are synthesized as an inactive precursor that is heavily N-glycosylated and processed likely by host cell furin in the Golgi to yield the mature SU and TM proteins. The cleavage site between SU and TM requires the minimal sequence [KR]-X-[KR]-R. About 2 of the 9 disulfide bonds of gp41 are reduced by P4HB/PDI, following binding to CD4 receptor.

It is found in the virion membrane. It localises to the host cell membrane. Its subcellular location is the host endosome membrane. Functionally, oligomerizes in the host endoplasmic reticulum into predominantly trimers. In a second time, gp160 transits in the host Golgi, where glycosylation is completed. The precursor is then proteolytically cleaved in the trans-Golgi and thereby activated by cellular furin or furin-like proteases to produce gp120 and gp41. In terms of biological role, attaches the virus to the host lymphoid cell by binding to the primary receptor CD4. This interaction induces a structural rearrangement creating a high affinity binding site for a chemokine coreceptor like CXCR4 and/or CCR5. Acts as a ligand for CD209/DC-SIGN and CLEC4M/DC-SIGNR, which are respectively found on dendritic cells (DCs), and on endothelial cells of liver sinusoids and lymph node sinuses. These interactions allow capture of viral particles at mucosal surfaces by these cells and subsequent transmission to permissive cells. HIV subverts the migration properties of dendritic cells to gain access to CD4+ T-cells in lymph nodes. Virus transmission to permissive T-cells occurs either in trans (without DCs infection, through viral capture and transmission), or in cis (following DCs productive infection, through the usual CD4-gp120 interaction), thereby inducing a robust infection. In trans infection, bound virions remain infectious over days and it is proposed that they are not degraded, but protected in non-lysosomal acidic organelles within the DCs close to the cell membrane thus contributing to the viral infectious potential during DCs' migration from the periphery to the lymphoid tissues. On arrival at lymphoid tissues, intact virions recycle back to DCs' cell surface allowing virus transmission to CD4+ T-cells. Its function is as follows. Acts as a class I viral fusion protein. Under the current model, the protein has at least 3 conformational states: pre-fusion native state, pre-hairpin intermediate state, and post-fusion hairpin state. During fusion of viral and target intracellular membranes, the coiled coil regions (heptad repeats) assume a trimer-of-hairpins structure, positioning the fusion peptide in close proximity to the C-terminal region of the ectodomain. The formation of this structure appears to drive apposition and subsequent fusion of viral and target cell membranes. Complete fusion occurs in host cell endosomes and is dynamin-dependent, however some lipid transfer might occur at the plasma membrane. The virus undergoes clathrin-dependent internalization long before endosomal fusion, thus minimizing the surface exposure of conserved viral epitopes during fusion and reducing the efficacy of inhibitors targeting these epitopes. Membranes fusion leads to delivery of the nucleocapsid into the cytoplasm. The protein is Envelope glycoprotein gp160 of Homo sapiens (Human).